Consider the following 239-residue polypeptide: Derlin-2 (239 aa).

Over 1-57 the chain is Cytoplasmic; that stretch reads MAYQSLRLEYLQIPPVSRAYTTACVLTTAAVQLELITPFQLYFNPELIFKHFQIWRL. The chain crosses the membrane as a helical span at residues 58–78; that stretch reads ITNFLFFGPVGFNFLFNMIFL. Residues 79-96 are Lumenal-facing; that stretch reads YRYCRMLEEGSFRGRTAD. The helical transmembrane segment at 97 to 117 threads the bilayer; that stretch reads FVFMFLFGGFLMTLFGLFVSL. At 118-150 the chain is on the cytoplasmic side; the sequence is VFLGQAFTIMLVYVWSRRNPYVRMNFFGLLNFQ. A helical membrane pass occupies residues 151-171; it reads APFLPWVLMGFSLLLGNSIIV. Residue Asp172 is a topological domain, lumenal. A helical membrane pass occupies residues 173–193; that stretch reads LLGIAVGHIYFFLEDIFPNQP. The Cytoplasmic segment spans residues 194–239; it reads GGIRILKTPSILRTIFDTPDEDPNYNPLPEERPGGFAWGEGQRLGG. The interval 214–239 is disordered; the sequence is EDPNYNPLPEERPGGFAWGEGQRLGG. The span at 229 to 239 shows a compositional bias: gly residues; sequence FAWGEGQRLGG.

This sequence belongs to the derlin family. In terms of assembly, forms homo- and heterooligomers with DERL3 and, to a lesser extent, with DERL1. Interacts with the SEL1L/SYVN1 and VCP/SELENOS protein complexes. Mediates association between VCP and EDEM1, as well as that between VCP and the misfolded glycoproteins. Interacts with OS9. Interacts with SELENOK and SELENOS. Interacts with the signal recognition particle/SRP and the SRP receptor; in the process of endoplasmic reticulum stress-induced pre-emptive quality control. Interacts with CCDC47. Widely expressed, with lowest levels in brain and heart.

The protein localises to the endoplasmic reticulum membrane. Functionally, functional component of endoplasmic reticulum-associated degradation (ERAD) for misfolded lumenal glycoproteins, but not that of misfolded nonglycoproteins. May act by forming a channel that allows the retrotranslocation of misfolded glycoproteins into the cytosol where they are ubiquitinated and degraded by the proteasome. May mediate the interaction between VCP and misfolded glycoproteins. May also be involved in endoplasmic reticulum stress-induced pre-emptive quality control, a mechanism that selectively attenuates the translocation of newly synthesized proteins into the endoplasmic reticulum and reroutes them to the cytosol for proteasomal degradation. This chain is Derlin-2, found in Mus musculus (Mouse).